Here is a 688-residue protein sequence, read N- to C-terminus: Glycine--tRNA ligase beta subunit (688 aa).

It belongs to the class-II aminoacyl-tRNA synthetase family. In terms of assembly, tetramer of two alpha and two beta subunits.

The protein localises to the cytoplasm. The enzyme catalyses tRNA(Gly) + glycine + ATP = glycyl-tRNA(Gly) + AMP + diphosphate. The polypeptide is Glycine--tRNA ligase beta subunit (Listeria welshimeri serovar 6b (strain ATCC 35897 / DSM 20650 / CCUG 15529 / CIP 8149 / NCTC 11857 / SLCC 5334 / V8)).